We begin with the raw amino-acid sequence, 234 residues long: Glutathione S-transferase sirG (234 aa).

The region spanning 15 to 99 (LYVVKATPTS…YLTDAYDHEG (85 aa)) is the GST N-terminal domain. Residues 105–230 (DLWERTQVNN…KALSQKFRPS (126 aa)) enclose the GST C-terminal domain.

The protein belongs to the GST superfamily.

The enzyme catalyses RX + glutathione = an S-substituted glutathione + a halide anion + H(+). It participates in mycotoxin biosynthesis. In terms of biological role, glutathione S-transferase; part of the gene cluster that mediates the biosynthesis of sirodesmin PL, an epipolythiodioxopiperazine (ETP) characterized by a disulfide bridged cyclic dipeptide and that acts as a phytotoxin which is involved in the blackleg didease of canola. SirD catalyzes the O-prenylation of L-tyrosine (L-Tyr) in the presence of dimethylallyl diphosphate (DMAPP) to yield 4-O-dimethylallyl-L-Tyr, and therefore represents probably the first pathway-specific enzyme in the biosynthesis of sirodesmin PL. 4-O-dimethylallyl-L-Tyr, then undergoes condensation with L-Ser in a reaction catalyzed by the non-ribosomal peptide synthase sirP to form the diketopiperazine (DKP) backbone. Further bishydroxylation of the DKP performed by the cytochrome P450 monooxygenase sirC leads to the production of the intermediate phomamide. This step is essential to form the reactive thiol group required for toxicity of sirodesmin PL. The next steps of sirodesmin biosynthesis are not well understood yet, but some predictions could be made from intermediate compounds identification. Phomamide is converted into phomalizarine via oxidation, probably by sirT. Further oxidation, methylation (by sirM or sirN) and reduction steps convert phomalizarine to deacetyl sirodesmin. Finally, acetyltransferase sirH probably acetylates deacetyl sirodesmin to produce sirodesmin PL. In Leptosphaeria maculans (Blackleg fungus), this protein is Glutathione S-transferase sirG.